A 353-amino-acid polypeptide reads, in one-letter code: Methionine import ATP-binding protein MetN (353 aa).

One can recognise an ABC transporter domain in the interval 6-249 (LKNVDVDFPQ…PKQELTKKFV (244 aa)). An ATP-binding site is contributed by 41 to 48 (GFSGAGKS).

It belongs to the ABC transporter superfamily. Methionine importer (TC 3.A.1.24) family. As to quaternary structure, the complex is composed of two ATP-binding proteins (MetN), two transmembrane proteins (MetI) and a solute-binding protein (MetQ).

Its subcellular location is the cell membrane. It carries out the reaction L-methionine(out) + ATP + H2O = L-methionine(in) + ADP + phosphate + H(+). The enzyme catalyses D-methionine(out) + ATP + H2O = D-methionine(in) + ADP + phosphate + H(+). Part of the ABC transporter complex MetNIQ involved in methionine import. Responsible for energy coupling to the transport system. The chain is Methionine import ATP-binding protein MetN from Lactobacillus acidophilus (strain ATCC 700396 / NCK56 / N2 / NCFM).